The following is a 172-amino-acid chain: Photosystem I assembly protein Ycf3 (172 aa).

3 TPR repeats span residues 35–70, 74–107, and 122–155; these read AFTY…EIDP, SYIL…NPFL, and GEQA…TPGN.

It belongs to the Ycf3 family.

It is found in the plastid. The protein localises to the chloroplast thylakoid membrane. In terms of biological role, essential for the assembly of the photosystem I (PSI) complex. May act as a chaperone-like factor to guide the assembly of the PSI subunits. This Sorghum bicolor (Sorghum) protein is Photosystem I assembly protein Ycf3.